The chain runs to 393 residues: 8-amino-7-oxononanoate synthase (393 aa).

Residue 107 to 108 participates in pyridoxal 5'-phosphate binding; the sequence is GF. Position 132 (H132) interacts with substrate. Pyridoxal 5'-phosphate-binding positions include S180, 205-208, and 236-239; these read DDAH and TLSK. K239 bears the N6-(pyridoxal phosphate)lysine mark. T353 is a binding site for substrate.

Belongs to the class-II pyridoxal-phosphate-dependent aminotransferase family. BioF subfamily. As to quaternary structure, homodimer. It depends on pyridoxal 5'-phosphate as a cofactor.

It catalyses the reaction 6-carboxyhexanoyl-[ACP] + L-alanine + H(+) = (8S)-8-amino-7-oxononanoate + holo-[ACP] + CO2. Its pathway is cofactor biosynthesis; biotin biosynthesis. Its function is as follows. Catalyzes the decarboxylative condensation of pimeloyl-[acyl-carrier protein] and L-alanine to produce 8-amino-7-oxononanoate (AON), [acyl-carrier protein], and carbon dioxide. The polypeptide is 8-amino-7-oxononanoate synthase (Coprothermobacter proteolyticus (strain ATCC 35245 / DSM 5265 / OCM 4 / BT)).